Reading from the N-terminus, the 393-residue chain is NAD(P)H-quinone oxidoreductase subunit H, chloroplastic (393 aa).

The protein belongs to the complex I 49 kDa subunit family. NDH is composed of at least 16 different subunits, 5 of which are encoded in the nucleus.

The protein localises to the plastid. Its subcellular location is the chloroplast thylakoid membrane. It catalyses the reaction a plastoquinone + NADH + (n+1) H(+)(in) = a plastoquinol + NAD(+) + n H(+)(out). The catalysed reaction is a plastoquinone + NADPH + (n+1) H(+)(in) = a plastoquinol + NADP(+) + n H(+)(out). In terms of biological role, NDH shuttles electrons from NAD(P)H:plastoquinone, via FMN and iron-sulfur (Fe-S) centers, to quinones in the photosynthetic chain and possibly in a chloroplast respiratory chain. The immediate electron acceptor for the enzyme in this species is believed to be plastoquinone. Couples the redox reaction to proton translocation, and thus conserves the redox energy in a proton gradient. The chain is NAD(P)H-quinone oxidoreductase subunit H, chloroplastic from Guizotia abyssinica (Niger).